Reading from the N-terminus, the 88-residue chain is uncharacterized protein (88 aa).

2 consecutive transmembrane segments (helical) span residues 27–46 (LFIFRVLNVVSIAILFETPH) and 61–83 (SMCLYNCYCLYNVVTFSLNLILI).

The protein resides in the membrane. This is an uncharacterized protein from Saccharomyces cerevisiae (strain ATCC 204508 / S288c) (Baker's yeast).